A 162-amino-acid polypeptide reads, in one-letter code: ATP synthase subunit b 1 (162 aa).

A helical membrane pass occupies residues 3–23 (FLDATFFAFVGLVLFLALVVY).

This sequence belongs to the ATPase B chain family. F-type ATPases have 2 components, F(1) - the catalytic core - and F(0) - the membrane proton channel. F(1) has five subunits: alpha(3), beta(3), gamma(1), delta(1), epsilon(1). F(0) has three main subunits: a(1), b(2) and c(10-14). The alpha and beta chains form an alternating ring which encloses part of the gamma chain. F(1) is attached to F(0) by a central stalk formed by the gamma and epsilon chains, while a peripheral stalk is formed by the delta and b chains.

The protein resides in the cell inner membrane. F(1)F(0) ATP synthase produces ATP from ADP in the presence of a proton or sodium gradient. F-type ATPases consist of two structural domains, F(1) containing the extramembraneous catalytic core and F(0) containing the membrane proton channel, linked together by a central stalk and a peripheral stalk. During catalysis, ATP synthesis in the catalytic domain of F(1) is coupled via a rotary mechanism of the central stalk subunits to proton translocation. Functionally, component of the F(0) channel, it forms part of the peripheral stalk, linking F(1) to F(0). This Rhizobium johnstonii (strain DSM 114642 / LMG 32736 / 3841) (Rhizobium leguminosarum bv. viciae) protein is ATP synthase subunit b 1.